The primary structure comprises 256 residues: ATP synthase peripheral stalk subunit b, mitochondrial (256 aa).

Residues methionine 1–alanine 42 constitute a mitochondrion transit peptide. The residue at position 131 (lysine 131) is an N6-succinyllysine. 7 positions are modified to N6-acetyllysine: lysine 139, lysine 154, lysine 162, lysine 221, lysine 225, lysine 233, and lysine 244.

Belongs to the eukaryotic ATPase B chain family. Component of the ATP synthase complex composed at least of ATP5F1A/subunit alpha, ATP5F1B/subunit beta, ATP5MC1/subunit c (homooctomer), MT-ATP6/subunit a, MT-ATP8/subunit 8, ATP5ME/subunit e, ATP5MF/subunit f, ATP5MG/subunit g, ATP5MK/subunit k, ATP5MJ/subunit j, ATP5F1C/subunit gamma, ATP5F1D/subunit delta, ATP5F1E/subunit epsilon, ATP5PF/subunit F6, ATP5PB/subunit b, ATP5PD/subunit d, ATP5PO/subunit OSCP. ATP synthase complex consists of a soluble F(1) head domain (subunits alpha(3) and beta(3)) - the catalytic core - and a membrane F(0) domain - the membrane proton channel (subunits c, a, 8, e, f, g, k and j). These two domains are linked by a central stalk (subunits gamma, delta, and epsilon) rotating inside the F1 region and a stationary peripheral stalk (subunits F6, b, d, and OSCP).

It localises to the mitochondrion. Its subcellular location is the mitochondrion inner membrane. In terms of biological role, subunit b, of the mitochondrial membrane ATP synthase complex (F(1)F(0) ATP synthase or Complex V) that produces ATP from ADP in the presence of a proton gradient across the membrane which is generated by electron transport complexes of the respiratory chain. ATP synthase complex consist of a soluble F(1) head domain - the catalytic core - and a membrane F(1) domain - the membrane proton channel. These two domains are linked by a central stalk rotating inside the F(1) region and a stationary peripheral stalk. During catalysis, ATP synthesis in the catalytic domain of F(1) is coupled via a rotary mechanism of the central stalk subunits to proton translocation. In vivo, can only synthesize ATP although its ATP hydrolase activity can be activated artificially in vitro. Part of the complex F(0) domain. Part of the complex F(0) domain and the peripheric stalk, which acts as a stator to hold the catalytic alpha(3)beta(3) subcomplex and subunit a/ATP6 static relative to the rotary elements. This is ATP synthase peripheral stalk subunit b, mitochondrial from Mus musculus (Mouse).